The sequence spans 330 residues: MLPLPRRQQQVLQATVQHYVDTVEPVGSRTLVRRFGLDASPATVRSAMGALEQKGLLTQPHTSAGRVPSPKGYRQFVDALLPEPGAAVVQLQRELAELSLQWAALDDLLHHLARRLADLTGLMSIITRPQRQEPRLKALRLVRSGDRLLVFLVESSAASSSLNLRLPPDSSAQLQALEHWLNDQLSKSAINWSGLPSHLQSVGAPLKQALASHNRGRNRQAEGALTTGLAGLLCQPEFQLTTSLRPLLQLVEQQPHELLNPAAATASGGVWIGQEHPHPALSGCAVVQAPYATASGGEGSVALVGPMRMAYATALAAVEAVAGTLSRLLA.

It belongs to the HrcA family.

Negative regulator of class I heat shock genes (grpE-dnaK-dnaJ and groELS operons). Prevents heat-shock induction of these operons. The polypeptide is Heat-inducible transcription repressor HrcA (Synechococcus sp. (strain RCC307)).